The following is a 347-amino-acid chain: GTP 3',8-cyclase (347 aa).

The Radical SAM core domain maps to 12 to 242 (FRPFGVLRLS…QRIDARWPLR (231 aa)). A GTP-binding site is contributed by R19. C26 and C30 together coordinate [4Fe-4S] cluster. Position 32 (Y32) interacts with S-adenosyl-L-methionine. Residue C33 participates in [4Fe-4S] cluster binding. R65 contacts GTP. G69 serves as a coordination point for S-adenosyl-L-methionine. T104 contributes to the GTP binding site. An S-adenosyl-L-methionine-binding site is contributed by S129. Residue K178 coordinates GTP. M212 provides a ligand contact to S-adenosyl-L-methionine. Residues C275 and C278 each contribute to the [4Fe-4S] cluster site. 280–282 (RLR) is a GTP binding site. Position 292 (C292) interacts with [4Fe-4S] cluster.

Belongs to the radical SAM superfamily. MoaA family. In terms of assembly, monomer and homodimer. It depends on [4Fe-4S] cluster as a cofactor.

It catalyses the reaction GTP + AH2 + S-adenosyl-L-methionine = (8S)-3',8-cyclo-7,8-dihydroguanosine 5'-triphosphate + 5'-deoxyadenosine + L-methionine + A + H(+). Its pathway is cofactor biosynthesis; molybdopterin biosynthesis. Functionally, catalyzes the cyclization of GTP to (8S)-3',8-cyclo-7,8-dihydroguanosine 5'-triphosphate. The sequence is that of GTP 3',8-cyclase from Synechococcus sp. (strain WH7803).